The chain runs to 504 residues: Maturase K (504 aa).

This sequence belongs to the intron maturase 2 family. MatK subfamily.

It is found in the plastid. It localises to the chloroplast. Usually encoded in the trnK tRNA gene intron. Probably assists in splicing its own and other chloroplast group II introns. The chain is Maturase K from Nepenthes distillatoria (Pitcher plant).